The following is a 149-amino-acid chain: Large ribosomal subunit protein bL9 (149 aa).

Belongs to the bacterial ribosomal protein bL9 family.

Its function is as follows. Binds to the 23S rRNA. The sequence is that of Large ribosomal subunit protein bL9 from Anaeromyxobacter dehalogenans (strain 2CP-1 / ATCC BAA-258).